The primary structure comprises 373 residues: Cytoplasmic tRNA 2-thiolation protein 1 (373 aa).

Belongs to the TtcA family. CTU1/NCS6/ATPBD3 subfamily.

The protein localises to the cytoplasm. Its pathway is tRNA modification; 5-methoxycarbonylmethyl-2-thiouridine-tRNA biosynthesis. In terms of biological role, plays a central role in 2-thiolation of mcm(5)S(2)U at tRNA wobble positions of tRNA(Lys), tRNA(Glu) and tRNA(Gln). Directly binds tRNAs and probably acts by catalyzing adenylation of tRNAs, an intermediate required for 2-thiolation. It is unclear whether it acts as a sulfurtransferase that transfers sulfur from thiocarboxylated URM1 onto the uridine of tRNAs at wobble position. Prior mcm(5) tRNA modification by the elongator complex is required for 2-thiolation. May also be involved in protein urmylation. The polypeptide is Cytoplasmic tRNA 2-thiolation protein 1 (Malassezia globosa (strain ATCC MYA-4612 / CBS 7966) (Dandruff-associated fungus)).